Here is a 106-residue protein sequence, read N- to C-terminus: MRGMGNMNNMMKQMQKMQKDMAKAQEELKDLTVTGTAGGEMVSVVADGHKNIIDVIIKEEVVDPDDVEMIQDLVLAATNDALKKVDELVSSKMGKFTQGMNMPGMF.

Residues M1–K16 are compositionally biased toward low complexity. Residues M1–K23 form a disordered region.

Belongs to the YbaB/EbfC family. In terms of assembly, homodimer.

It is found in the cytoplasm. The protein localises to the nucleoid. In terms of biological role, binds to DNA and alters its conformation. May be involved in regulation of gene expression, nucleoid organization and DNA protection. This is Nucleoid-associated protein Exig_0019 from Exiguobacterium sibiricum (strain DSM 17290 / CCUG 55495 / CIP 109462 / JCM 13490 / 255-15).